The following is a 390-amino-acid chain: ATP-sensitive inward rectifier potassium channel 11 (390 aa).

The Cytoplasmic portion of the chain corresponds to 1–65 (MLSRKGIIPE…LQDVFTTLVD (65 aa)). 2 residues coordinate ATP: N48 and R50. A helical transmembrane segment spans residues 66 to 92 (LKWPHTLLIFTMSFLCSWLLFAMAWWL). The Extracellular portion of the chain corresponds to 93-116 (IAFAHGDLAPSEGTAEPCVTSIHS). The cysteines at positions 110 and 142 are disulfide-linked. Positions 117–133 (FSSAFLFSIEVQVTIGF) form an intramembrane region, discontinuously helical; Pore-forming. The K(+) site is built by T130 and F133. The Selectivity filter motif lies at 130-135 (TIGFGG). Over 134 to 142 (GGRMVTEEC) the chain is Extracellular. A helical membrane pass occupies residues 143–171 (PLAILILIVQNIVGLMINAIMLGCIFMKT). At 172 to 390 (AQAHRRAETL…KFSISPDSLS (219 aa)) the chain is on the cytoplasmic side. R176 is an a 1,2-diacyl-sn-glycero-3-phospho-(1D-myo-inositol-4,5-bisphosphate) binding site. Y330 serves as a coordination point for ATP. T341 is subject to Phosphothreonine; by MAPK1. Phosphoserine; by MAPK1 is present on S385.

This sequence belongs to the inward rectifier-type potassium channel (TC 1.A.2.1) family. KCNJ11 subfamily. In terms of assembly, homotetramer; the homotetramer binds four ATP molecules (one ATP per subunit). Forms an heterooctamer with ABCC8/SUR1; one KCNJ11 homotetramer interacts with four ABCC8/SUR1 molecules. Interacts with ABCC9/SUR2. In terms of processing, phosphorylation by MAPK1 results in changes in channel gating that destabilize the closed states and reduce the ATP sensitivity.

The protein localises to the membrane. The catalysed reaction is K(+)(in) = K(+)(out). With respect to regulation, KATP channels are regulated by cytoplasmic ATP/ADP ratios; ATP inhibits the channel by closing the pore, while ADP activates the channel. Activated by phosphatidylinositol 4,5-biphosphate (PtdIns(4,5)P2). Its function is as follows. Inward rectifier potassium channel that forms the pore of ATP-sensitive potassium channels (KATP), regulating potassium permeability as a function of cytoplasmic ATP and ADP concentrations in many different cells. Inward rectifier potassium channels are characterized by a greater tendency to allow potassium to flow into the cell rather than out of it. Their voltage dependence is regulated by the concentration of extracellular potassium; as external potassium is raised, the voltage range of the channel opening shifts to more positive voltages. The inward rectification is mainly due to the blockage of outward current by internal magnesium. Can be blocked by extracellular barium. In pancreatic cells, it forms KATP channels with ABCC8/SUR1. Can form cardiac and smooth muscle-type KATP channels with ABCC9. The polypeptide is ATP-sensitive inward rectifier potassium channel 11 (KCNJ11) (Homo sapiens (Human)).